Reading from the N-terminus, the 162-residue chain is Ribosomal RNA large subunit methyltransferase H (162 aa).

Residues Leu-78, Gly-109, and 128-133 (LSALTL) each bind S-adenosyl-L-methionine.

This sequence belongs to the RNA methyltransferase RlmH family. As to quaternary structure, homodimer.

Its subcellular location is the cytoplasm. It catalyses the reaction pseudouridine(1915) in 23S rRNA + S-adenosyl-L-methionine = N(3)-methylpseudouridine(1915) in 23S rRNA + S-adenosyl-L-homocysteine + H(+). Its function is as follows. Specifically methylates the pseudouridine at position 1915 (m3Psi1915) in 23S rRNA. This is Ribosomal RNA large subunit methyltransferase H from Psychrobacter arcticus (strain DSM 17307 / VKM B-2377 / 273-4).